Reading from the N-terminus, the 273-residue chain is Undecaprenyl-diphosphatase (273 aa).

Helical transmembrane passes span 48–68 (AANT…VVVF), 89–109 (LTLL…VLFE), 116–136 (LFST…MIVA), 152–172 (ITYK…WPGF), 193–213 (ADFT…LSLL), 222–242 (ADIP…LLAI), and 252–272 (IRLV…YFLY).

Belongs to the UppP family.

The protein localises to the cell membrane. The catalysed reaction is di-trans,octa-cis-undecaprenyl diphosphate + H2O = di-trans,octa-cis-undecaprenyl phosphate + phosphate + H(+). In terms of biological role, catalyzes the dephosphorylation of undecaprenyl diphosphate (UPP). Confers resistance to bacitracin. The polypeptide is Undecaprenyl-diphosphatase (Geobacillus thermodenitrificans (strain NG80-2)).